The primary structure comprises 670 residues: uncharacterized protein (670 aa).

10 helical membrane-spanning segments follow: residues 23–42 (YALR…YYLN), 47–69 (YWAM…SKSL), 76–98 (LLGA…FFLL), 118–140 (VAYA…VNIT), 153–170 (VCEV…MMIL), 381–403 (QWDA…SAVA), 410–432 (SLLM…GLMV), 437–454 (LWQF…MQLL), 461–483 (FAAL…NPPV), and 493–510 (NLAK…FAIL).

The protein belongs to the aromatic acid exporter ArAE (TC 2.A.85) family.

It localises to the cell membrane. This is an uncharacterized protein from Escherichia coli O157:H7.